Reading from the N-terminus, the 425-residue chain is Serine--tRNA ligase (425 aa).

Thr-233–Glu-235 contributes to the L-serine binding site. Arg-264 to Glu-266 provides a ligand contact to ATP. Glu-287 serves as a coordination point for L-serine. Position 351-354 (Glu-351–Ser-354) interacts with ATP. Residue Ser-387 participates in L-serine binding.

Belongs to the class-II aminoacyl-tRNA synthetase family. Type-1 seryl-tRNA synthetase subfamily. As to quaternary structure, homodimer. The tRNA molecule binds across the dimer.

It localises to the cytoplasm. The catalysed reaction is tRNA(Ser) + L-serine + ATP = L-seryl-tRNA(Ser) + AMP + diphosphate + H(+). It carries out the reaction tRNA(Sec) + L-serine + ATP = L-seryl-tRNA(Sec) + AMP + diphosphate + H(+). Its pathway is aminoacyl-tRNA biosynthesis; selenocysteinyl-tRNA(Sec) biosynthesis; L-seryl-tRNA(Sec) from L-serine and tRNA(Sec): step 1/1. Its function is as follows. Catalyzes the attachment of serine to tRNA(Ser). Is also able to aminoacylate tRNA(Sec) with serine, to form the misacylated tRNA L-seryl-tRNA(Sec), which will be further converted into selenocysteinyl-tRNA(Sec). This is Serine--tRNA ligase from Clostridium botulinum (strain Alaska E43 / Type E3).